A 153-amino-acid chain; its full sequence is Pheromone-binding protein Gp-9 (153 aa).

The N-terminal stretch at 1–19 (MKTFVLHIFIFALVAFASA) is a signal peptide. Cystine bridges form between C37-C77, C73-C129, and C118-C138.

This sequence belongs to the PBP/GOBP family. In terms of assembly, homodimer.

Its subcellular location is the secreted. Functionally, colony queen number, a major feature of social organization, is associated with worker genotype for Gp-9. Colonies are headed by either a single reproductive queen (monogyne form) or multiple queens (polygyne form). Differences in worker Gp-9 genotypes between social forms may cause differences in workers' abilities to recognize queens and regulate their numbers. The polypeptide is Pheromone-binding protein Gp-9 (Solenopsis sp. (strain B0-153) (Fire ant)).